The following is a 462-amino-acid chain: Integrator complex subunit 12 (462 aa).

The disordered stretch occupies residues 42 to 129 (GIDSSYRPSQ…LEKPETQSSP (88 aa)). Residues 59–86 (ISSTKNISIKQEPKISSSLPSGNNNGKV) are compositionally biased toward polar residues. Residue lysine 68 forms a Glycyl lysine isopeptide (Lys-Gly) (interchain with G-Cter in SUMO2) linkage. Basic and acidic residues predominate over residues 88-124 (TTEKVKKEAEKRPADKMKSDITEGVDIPKKPRLEKPE). A Phosphoserine modification is found at serine 128. The segment at 159–215 (GLACVVCRQMMVASGNQLVECQECHNLYHRDCHKPQVTDKEANDPRLVWYCARCTRQ) adopts a PHD-type zinc-finger fold. A Glycyl lysine isopeptide (Lys-Gly) (interchain with G-Cter in SUMO2) cross-link involves residue lysine 254. A compositionally biased stretch (polar residues) spans 301–328 (SSAGPSTAKLSSTTQNSTGKPATSSANQ). The tract at residues 301 to 462 (SSAGPSTAKL…KKAAQKKLKK (162 aa)) is disordered. 2 stretches are compositionally biased toward low complexity: residues 347–358 (KIGSNNSTTPTV) and 396–437 (GNSS…GPTS). Positions 449–462 (QMVKKKAAQKKLKK) are enriched in basic residues.

Belongs to the Integrator subunit 12 family. In terms of assembly, component of the Integrator complex, composed of core subunits INTS1, INTS2, INTS3, INTS4, INTS5, INTS6, INTS7, INTS8, INTS9/RC74, INTS10, INTS11/CPSF3L, INTS12, INTS13, INTS14 and INTS15. The core complex associates with protein phosphatase 2A subunits PPP2CA and PPP2R1A, to form the Integrator-PP2A (INTAC) complex. Post-translationally, dephosphorylated at Ser-128 by the PNUTS-PP1 complex, promoting RNA polymerase II transcription pause-release.

It localises to the nucleus. Functionally, component of the integrator complex, a multiprotein complex that terminates RNA polymerase II (Pol II) transcription in the promoter-proximal region of genes. The integrator complex provides a quality checkpoint during transcription elongation by driving premature transcription termination of transcripts that are unfavorably configured for transcriptional elongation: the complex terminates transcription by (1) catalyzing dephosphorylation of the C-terminal domain (CTD) of Pol II subunit POLR2A/RPB1 and SUPT5H/SPT5, (2) degrading the exiting nascent RNA transcript via endonuclease activity and (3) promoting the release of Pol II from bound DNA. The integrator complex is also involved in terminating the synthesis of non-coding Pol II transcripts, such as enhancer RNAs (eRNAs), small nuclear RNAs (snRNAs), telomerase RNAs and long non-coding RNAs (lncRNAs). Mediates recruitment of cytoplasmic dynein to the nuclear envelope, probably as component of the integrator complex. This chain is Integrator complex subunit 12 (INTS12), found in Macaca fascicularis (Crab-eating macaque).